The following is a 357-amino-acid chain: S-adenosylmethionine:tRNA ribosyltransferase-isomerase (357 aa).

The protein belongs to the QueA family. Monomer.

It is found in the cytoplasm. The catalysed reaction is 7-aminomethyl-7-carbaguanosine(34) in tRNA + S-adenosyl-L-methionine = epoxyqueuosine(34) in tRNA + adenine + L-methionine + 2 H(+). Its pathway is tRNA modification; tRNA-queuosine biosynthesis. In terms of biological role, transfers and isomerizes the ribose moiety from AdoMet to the 7-aminomethyl group of 7-deazaguanine (preQ1-tRNA) to give epoxyqueuosine (oQ-tRNA). This Proteus mirabilis (strain HI4320) protein is S-adenosylmethionine:tRNA ribosyltransferase-isomerase.